The following is a 1059-amino-acid chain: RNA-binding protein 26 (1059 aa).

2 stretches are compositionally biased toward basic and acidic residues: residues 98 to 114 (EKEI…EKEK) and 130 to 147 (RHKD…DRES). Residues 98–275 (EKEIKKDEVN…PVDNSYASGS (178 aa)) are disordered. Residues 172–182 (LNSNKVQNAKN) are compositionally biased toward polar residues. Residues 184-213 (RSRDDRKRDDRFRKREYDRNVPRRDSYRDR) show a composition bias toward basic and acidic residues. Positions 214-231 (YNRRRGRSRSYSRSRSRS) are enriched in basic residues. Over residues 232-266 (WSKERQRDRDRSRSRTRSRDKDSGKPKFDLDRPDP) the composition is skewed to basic and acidic residues. The C3H1-type zinc-finger motif lies at 327 to 355 (QMQKKRCRDYDEKGFCMRGDMCPFDHGSD). Positions 375 to 428 (PVLEGPPPPGLPPPPSLLTPPPVNLQPPPVPPPGPLPPSLPPVTGPPPPLPPLQ) are enriched in pro residues. Residues 375–443 (PVLEGPPPPG…APPNSATSSV (69 aa)) form a disordered region. Positions 434 to 443 (APPNSATSSV) are enriched in low complexity. Residues 581 to 655 (TKLELRRIPP…RFIRMYWHRE (75 aa)) enclose the RRM 1 domain. A coiled-coil region spans residues 771–873 (GDAQKKKQEA…LLDTELDLYN (103 aa)). In terms of domain architecture, RRM 2 spans 942-1011 (RALKISGFTE…QDLKLAWNKP (70 aa)). Residues 1010-1059 (KPVPNASSTEVEDADQEEEEFHEDSIVDDSLLQDDDEEEEDDNESRSWRR) form a disordered region. Composition is skewed to acidic residues over residues 1019–1031 (EVED…EEFH) and 1040–1052 (LLQD…EDDN).

Functionally, may be involved in the turnover of nuclear polyadenylated (pA+) RNA. The protein is RNA-binding protein 26 of Xenopus laevis (African clawed frog).